The following is a 700-amino-acid chain: Acyl-coenzyme A oxidase 2 (700 aa).

The protein belongs to the acyl-CoA oxidase family. As to quaternary structure, heteropentamer composed of five different subunits. Requires FAD as cofactor.

The protein localises to the peroxisome. It catalyses the reaction a 2,3-saturated acyl-CoA + O2 = a (2E)-enoyl-CoA + H2O2. The protein operates within lipid metabolism; peroxisomal fatty acid beta-oxidation. Its function is as follows. Oxidizes strain chain acyl-CoAs with a chain length of 10 to 14 carbons. Also active toward the 2S isomers of acyl-CoA-esters containing a 2-methyl group. This chain is Acyl-coenzyme A oxidase 2 (POX2), found in Yarrowia lipolytica (strain CLIB 122 / E 150) (Yeast).